Here is a 372-residue protein sequence, read N- to C-terminus: MSNQHTLLVSNLLPVGSNISTWWNFGSMLLTCLALQTMTGFFLAIHYTANINLAFSSVIHITRDVPYGWIMQNIHAISASLFFICIYIHIARGLYYGLYLNKEVWLSGTTLLITLMATAFFGYVLPWGQMSFWAATVITNLLTAIPYLGATLTTWLWGGFSINDPTLTRFFALHFILPFAIISLSSIHIILLHNEGSNNPLGTNSDIDKIPFHPYHSYKDMLMITSMITLLFIILSFSPNLLNDPENFSKANPLVTPQHIKPEWYFLFAYGILRSIPNKLGGTLALLTSVAILTTVPFTHTSYTRSMMFRPLSQALFWTLIATFITITWTASKPVEPPFVTISQTTSIIYFSFFITIPLLGWAENKMMMMNN.

4 helical membrane-spanning segments follow: residues 25–45 (FGSM…FLAI), 69–90 (WIMQ…YIHI), 105–125 (WLSG…GYVL), and 170–190 (FFAL…IHII). Residues His75 and His89 each contribute to the heme b site. Residues His174 and His188 each coordinate heme b. His193 contacts a ubiquinone. Transmembrane regions (helical) follow at residues 218–238 (YKDM…LSFS), 280–300 (LGGT…PFTH), 312–332 (LSQA…WTAS), and 339–358 (FVTI…ITIP).

Belongs to the cytochrome b family. The cytochrome bc1 complex contains 3 respiratory subunits (MT-CYB, CYC1 and UQCRFS1), 2 core proteins (UQCRC1 and UQCRC2) and probably 6 low-molecular weight proteins. It depends on heme b as a cofactor.

It localises to the mitochondrion inner membrane. Component of the ubiquinol-cytochrome c reductase complex (complex III or cytochrome b-c1 complex) that is part of the mitochondrial respiratory chain. The b-c1 complex mediates electron transfer from ubiquinol to cytochrome c. Contributes to the generation of a proton gradient across the mitochondrial membrane that is then used for ATP synthesis. The chain is Cytochrome b (MT-CYB) from Naja multifasciata (Burrowing cobra).